Reading from the N-terminus, the 149-residue chain is Probable flagellum biosynthesis repressor protein FlbT (149 aa).

This sequence belongs to the FlbT family.

Has a post-transcriptional repressor function in flagellum biogenesis. Associates with the 5'-UTR of fljK mRNA and promotes its degradation. This Rhizobium etli (strain ATCC 51251 / DSM 11541 / JCM 21823 / NBRC 15573 / CFN 42) protein is Probable flagellum biosynthesis repressor protein FlbT.